Here is a 335-residue protein sequence, read N- to C-terminus: Lipoyl synthase (335 aa).

The [4Fe-4S] cluster site is built by Cys-55, Cys-60, Cys-66, Cys-81, Cys-85, Cys-88, and Ser-292. Positions 67-281 (WEDREATFLI…SQRAEEIGFQ (215 aa)) constitute a Radical SAM core domain.

Belongs to the radical SAM superfamily. Lipoyl synthase family. [4Fe-4S] cluster is required as a cofactor.

The protein resides in the cytoplasm. The catalysed reaction is [[Fe-S] cluster scaffold protein carrying a second [4Fe-4S](2+) cluster] + N(6)-octanoyl-L-lysyl-[protein] + 2 oxidized [2Fe-2S]-[ferredoxin] + 2 S-adenosyl-L-methionine + 4 H(+) = [[Fe-S] cluster scaffold protein] + N(6)-[(R)-dihydrolipoyl]-L-lysyl-[protein] + 4 Fe(3+) + 2 hydrogen sulfide + 2 5'-deoxyadenosine + 2 L-methionine + 2 reduced [2Fe-2S]-[ferredoxin]. Its pathway is protein modification; protein lipoylation via endogenous pathway; protein N(6)-(lipoyl)lysine from octanoyl-[acyl-carrier-protein]: step 2/2. Its function is as follows. Catalyzes the radical-mediated insertion of two sulfur atoms into the C-6 and C-8 positions of the octanoyl moiety bound to the lipoyl domains of lipoate-dependent enzymes, thereby converting the octanoylated domains into lipoylated derivatives. The protein is Lipoyl synthase of Micrococcus luteus (strain ATCC 4698 / DSM 20030 / JCM 1464 / CCM 169 / CCUG 5858 / IAM 1056 / NBRC 3333 / NCIMB 9278 / NCTC 2665 / VKM Ac-2230) (Micrococcus lysodeikticus).